Reading from the N-terminus, the 178-residue chain is uncharacterized protein (178 aa).

In terms of domain architecture, MSP spans 52–177 (HIAIEDRAHQ…RRLPASFLST (126 aa)).

This is an uncharacterized protein from Caenorhabditis elegans.